The sequence spans 192 residues: UPF0312 protein Psyr_0457 (192 aa).

The signal sequence occupies residues 1 to 23 (MLKKSLAALALGTALLSAGQAMA).

The protein belongs to the UPF0312 family. Type 1 subfamily.

It localises to the periplasm. This is UPF0312 protein Psyr_0457 from Pseudomonas syringae pv. syringae (strain B728a).